The primary structure comprises 235 residues: Orotidine 5'-phosphate decarboxylase (235 aa).

Substrate is bound by residues aspartate 12, lysine 34, 61-70 (DMKLLDIDNT), threonine 116, arginine 177, glutamine 186, glycine 206, and arginine 207. The active-site Proton donor is the lysine 63.

The protein belongs to the OMP decarboxylase family. Type 1 subfamily. In terms of assembly, homodimer.

The enzyme catalyses orotidine 5'-phosphate + H(+) = UMP + CO2. It participates in pyrimidine metabolism; UMP biosynthesis via de novo pathway; UMP from orotate: step 2/2. Its function is as follows. Catalyzes the decarboxylation of orotidine 5'-monophosphate (OMP) to uridine 5'-monophosphate (UMP). This is Orotidine 5'-phosphate decarboxylase from Rhizobium johnstonii (strain DSM 114642 / LMG 32736 / 3841) (Rhizobium leguminosarum bv. viciae).